A 390-amino-acid polypeptide reads, in one-letter code: S-adenosylmethionine synthase 3 (390 aa).

Glu-9 provides a ligand contact to Mg(2+). His-15 is a binding site for ATP. K(+) is bound at residue Glu-43. Residues Glu-56 and Gln-99 each coordinate L-methionine. Residues 167–169 (DGK), 235–238 (SGRF), Asp-246, 252–253 (RK), Ala-269, Lys-273, and Lys-277 contribute to the ATP site. Asp-246 contributes to the L-methionine binding site. Lys-277 provides a ligand contact to L-methionine.

The protein belongs to the AdoMet synthase family. Homotetramer. Mn(2+) serves as cofactor. Mg(2+) is required as a cofactor. It depends on Co(2+) as a cofactor. The cofactor is K(+). Requires NH4(+) as cofactor. Mostly expressed in roots, and, to a lower extent, in hypocotyls and cotyledons.

It localises to the cytoplasm. It catalyses the reaction L-methionine + ATP + H2O = S-adenosyl-L-methionine + phosphate + diphosphate. Its pathway is amino-acid biosynthesis; S-adenosyl-L-methionine biosynthesis; S-adenosyl-L-methionine from L-methionine: step 1/1. With respect to regulation, inhibited by products of SAMS reaction (SAM, Pi, PPi), substrate analogs (cycloleucine and ethionine), and alternative nucleotides (GTP, CTP and ADP). Strongly repressed by PPPi. In terms of biological role, catalyzes the formation of S-adenosylmethionine from methionine and ATP. The reaction comprises two steps that are both catalyzed by the same enzyme: formation of S-adenosylmethionine (AdoMet) and triphosphate, and subsequent hydrolysis of the triphosphate. This chain is S-adenosylmethionine synthase 3 (SAMS3), found in Catharanthus roseus (Madagascar periwinkle).